The chain runs to 296 residues: 33 kDa chaperonin (296 aa).

Disulfide bonds link Cys233-Cys235 and Cys267-Cys270.

The protein belongs to the HSP33 family. Post-translationally, under oxidizing conditions two disulfide bonds are formed involving the reactive cysteines. Under reducing conditions zinc is bound to the reactive cysteines and the protein is inactive.

It is found in the cytoplasm. Redox regulated molecular chaperone. Protects both thermally unfolding and oxidatively damaged proteins from irreversible aggregation. Plays an important role in the bacterial defense system toward oxidative stress. This chain is 33 kDa chaperonin, found in Actinobacillus pleuropneumoniae serotype 5b (strain L20).